The following is a 723-amino-acid chain: Homeobox protein vnd (723 aa).

4 disordered regions span residues 1-115, 224-307, 465-549, and 703-723; these read MTTS…GLAP, AHHG…HHHP, GSSG…RKRR, and HAHA…AWWP. The segment covering 10–22 has biased composition (basic and acidic residues); that stretch reads TPSKRDRDRERDN. The segment covering 23 to 36 has biased composition (low complexity); that stretch reads SSGLGSAGSLPASP. Positions 37 to 48 are enriched in polar residues; that stretch reads QSAITVSPSSPA. Residues 61 to 92 show a composition bias toward basic and acidic residues; it reads LERKREREDREDREDRKERQERHERDRDHERF. Residues 97–111 show a composition bias toward low complexity; that stretch reads STASTTVPTNTSSSS. Positions 226–235 are enriched in basic and acidic residues; sequence HGSDLSHHSA. Polar residues predominate over residues 237–255; that stretch reads ESTSGHRGQGSHTSPSALS. Positions 278–289 are enriched in basic and acidic residues; the sequence is EADHHSTTEHHA. Residues 298–307 are compositionally biased toward basic residues; the sequence is HPHHQQHHHP. Over residues 483-493 the composition is skewed to low complexity; it reads NNNNNTTNNNN. The span at 512–528 shows a compositional bias: acidic residues; it reads LNEDGIEEDIDDVDDAD. A DNA-binding region (homeobox) is located at residues 545 to 604; the sequence is KRKRRVLFTKAQTYELERRFRQQRYLSAPEREHLASLIRLTPTQVKIWFQNHRYKTKRAQ. Residues 703–716 show a composition bias toward basic residues; that stretch reads HAHAHGHGHPHAHA.

Belongs to the NK-2 homeobox family. Expressed in the CNS and midgut.

The protein resides in the nucleus. In terms of biological role, probable transcriptional regulator involved in the regulation of the proneural AS-C genes and the neurogenic genes of the enhancer of split complex. Could specifically activate proneural genes in the ventral-most neuroectoderm. The sequence is that of Homeobox protein vnd (vnd) from Drosophila melanogaster (Fruit fly).